The following is a 238-amino-acid chain: Opacity protein opA66 (238 aa).

Residue Ala-1 is a signal peptide. Disordered regions lie at residues 88–109 (NLQR…QENG) and 162–183 (GARG…AHQE). Residues 168 to 183 (PTVSSPYKNTQDAHQE) show a composition bias toward polar residues.

It belongs to the opacity porin family.

Its subcellular location is the cell outer membrane. Its function is as follows. Implicated in a number of adherence functions. OPA proteins are implicated in pathogenesis and are subject to phase variation. The sequence is that of Opacity protein opA66 from Neisseria gonorrhoeae.